We begin with the raw amino-acid sequence, 289 residues long: ATP synthase gamma chain (289 aa).

Belongs to the ATPase gamma chain family. In terms of assembly, F-type ATPases have 2 components, CF(1) - the catalytic core - and CF(0) - the membrane proton channel. CF(1) has five subunits: alpha(3), beta(3), gamma(1), delta(1), epsilon(1). CF(0) has three main subunits: a, b and c.

It localises to the cell inner membrane. Produces ATP from ADP in the presence of a proton gradient across the membrane. The gamma chain is believed to be important in regulating ATPase activity and the flow of protons through the CF(0) complex. The polypeptide is ATP synthase gamma chain (Anaeromyxobacter dehalogenans (strain 2CP-C)).